A 117-amino-acid polypeptide reads, in one-letter code: Ribosome-binding factor A (117 aa).

The protein belongs to the RbfA family. Monomer. Binds 30S ribosomal subunits, but not 50S ribosomal subunits or 70S ribosomes.

The protein localises to the cytoplasm. One of several proteins that assist in the late maturation steps of the functional core of the 30S ribosomal subunit. Associates with free 30S ribosomal subunits (but not with 30S subunits that are part of 70S ribosomes or polysomes). Required for efficient processing of 16S rRNA. May interact with the 5'-terminal helix region of 16S rRNA. The sequence is that of Ribosome-binding factor A from Nitrosomonas eutropha (strain DSM 101675 / C91 / Nm57).